We begin with the raw amino-acid sequence, 210 residues long: T-cell antigen CD7 (210 aa).

A signal peptide spans 1 to 23 (MTQQAVLALLLTLAGILPGPLDA). The 106-residue stretch at 24 to 129 (QDVHQSPRLT…RGLFTTVVVK (106 aa)) folds into the Ig-like domain. The Extracellular segment spans residues 24-150 (QDVHQSPRLT…EPLQTSFSFP (127 aa)). N-linked (GlcNAc...) asparagine glycans are attached at residues Asn-42, Asn-86, and Asn-93. Cys-45 and Cys-111 are joined by a disulfide. The helical transmembrane segment at 151–171 (AAIAVGFFFTGLLLGVVCSML) threads the bilayer. A lipid anchor (S-palmitoyl cysteine) is attached at Cys-168. Residues 172–210 (RKIQIKKLCASGIKESPCVVYEDMSYSNRKTPCIPNQYQ) lie on the Cytoplasmic side of the membrane.

Interacts with SECTM1.

It is found in the membrane. Its function is as follows. Transmembrane glycoprotein expressed by T-cells and natural killer (NK) cells and their precursors. Plays a costimulatory role in T-cell activation upon binding to its ligand K12/SECTM1. In turn, mediates the production of cytokines such as IL-2. On resting NK-cells, CD7 activation results in a significant induction of gamma-interferon levels. The polypeptide is T-cell antigen CD7 (Cd7) (Mus musculus (Mouse)).